Consider the following 372-residue polypeptide: Alanine racemase (372 aa).

K33 serves as the catalytic Proton acceptor; specific for D-alanine. K33 is modified (N6-(pyridoxal phosphate)lysine). R131 is a substrate binding site. Y261 functions as the Proton acceptor; specific for L-alanine in the catalytic mechanism. Residue M309 coordinates substrate.

The protein belongs to the alanine racemase family. Pyridoxal 5'-phosphate serves as cofactor.

It catalyses the reaction L-alanine = D-alanine. It participates in amino-acid biosynthesis; D-alanine biosynthesis; D-alanine from L-alanine: step 1/1. Its function is as follows. Catalyzes the interconversion of L-alanine and D-alanine. May also act on other amino acids. The protein is Alanine racemase (alr) of Salinispora arenicola (strain CNS-205).